A 399-amino-acid polypeptide reads, in one-letter code: Coiled-coil domain-containing protein 85C-B (399 aa).

Coiled-coil stretches lie at residues Asn52–Cys84 and Lys113–Leu144. Positions Asn151–His199 are disordered. The segment covering Ser155–Asn169 has biased composition (low complexity).

It belongs to the CCDC85 family.

Its subcellular location is the cell junction. The protein localises to the tight junction. The protein resides in the adherens junction. In terms of biological role, may play a role in cell-cell adhesion and epithelium development through its interaction with proteins of the beta-catenin family. May play an important role in cortical development, especially in the maintenance of radial glia. This is Coiled-coil domain-containing protein 85C-B (ccdc85cb) from Danio rerio (Zebrafish).